Consider the following 299-residue polypeptide: ATP phosphoribosyltransferase (299 aa).

Belongs to the ATP phosphoribosyltransferase family. Long subfamily. Mg(2+) is required as a cofactor.

Its subcellular location is the cytoplasm. It carries out the reaction 1-(5-phospho-beta-D-ribosyl)-ATP + diphosphate = 5-phospho-alpha-D-ribose 1-diphosphate + ATP. Its pathway is amino-acid biosynthesis; L-histidine biosynthesis; L-histidine from 5-phospho-alpha-D-ribose 1-diphosphate: step 1/9. Feedback inhibited by histidine. Catalyzes the condensation of ATP and 5-phosphoribose 1-diphosphate to form N'-(5'-phosphoribosyl)-ATP (PR-ATP). Has a crucial role in the pathway because the rate of histidine biosynthesis seems to be controlled primarily by regulation of HisG enzymatic activity. The protein is ATP phosphoribosyltransferase of Baumannia cicadellinicola subsp. Homalodisca coagulata.